Reading from the N-terminus, the 523-residue chain is 2-isopropylmalate synthase (523 aa).

Positions 5–267 (VVIFDTTLRD…QTRINHNEIW (263 aa)) constitute a Pyruvate carboxyltransferase domain. Residues D14, H202, H204, and N238 each contribute to the Mn(2+) site. The tract at residues 392–523 (RMDYFSVQSG…QNKENNKETV (132 aa)) is regulatory domain.

This sequence belongs to the alpha-IPM synthase/homocitrate synthase family. LeuA type 1 subfamily. Homodimer. Requires Mn(2+) as cofactor.

It is found in the cytoplasm. The catalysed reaction is 3-methyl-2-oxobutanoate + acetyl-CoA + H2O = (2S)-2-isopropylmalate + CoA + H(+). It participates in amino-acid biosynthesis; L-leucine biosynthesis; L-leucine from 3-methyl-2-oxobutanoate: step 1/4. Catalyzes the condensation of the acetyl group of acetyl-CoA with 3-methyl-2-oxobutanoate (2-ketoisovalerate) to form 3-carboxy-3-hydroxy-4-methylpentanoate (2-isopropylmalate). The polypeptide is 2-isopropylmalate synthase (Enterobacter sp. (strain 638)).